The chain runs to 375 residues: Homeobox protein Meis3 (375 aa).

The segment at 25–51 (PETVPAVPGPYGPHRPPQPLPPGLDSD) is disordered. Residues 31–46 (VPGPYGPHRPPQPLPP) show a composition bias toward pro residues. In terms of domain architecture, MEIS N-terminal spans 96 to 179 (GGDVCSSDSF…PIDLVIEDRD (84 aa)). Disordered regions lie at residues 197 to 268 (PDQN…KRGI) and 329 to 348 (NRTG…GGYT). A compositionally biased stretch (low complexity) spans 227-241 (SQSGDNSSDQGDGLD). A DNA-binding region (homeobox; TALE-type) is located at residues 262 to 324 (RNKKRGIFPK…NARRRIVQPM (63 aa)).

This sequence belongs to the TALE/MEIS homeobox family.

The protein localises to the nucleus. Transcriptional regulator which directly modulates PDPK1 expression, thus promoting survival of pancreatic beta-cells. Also regulates expression of NDFIP1, BNIP3, and CCNG1. The sequence is that of Homeobox protein Meis3 (MEIS3) from Homo sapiens (Human).